Here is a 434-residue protein sequence, read N- to C-terminus: Putative D-alanyl-D-alanine carboxypeptidase (434 aa).

A helical; Signal-anchor transmembrane segment spans residues Y7 to L25.

Belongs to the peptidase S12 family. YfeW subfamily.

It localises to the cell inner membrane. The catalysed reaction is Preferential cleavage: (Ac)2-L-Lys-D-Ala-|-D-Ala. Also transpeptidation of peptidyl-alanyl moieties that are N-acyl substituents of D-alanine.. Functionally, penicillin-binding protein. Has low DD-carboxypeptidase activity. The chain is Putative D-alanyl-D-alanine carboxypeptidase from Escherichia coli (strain K12).